Reading from the N-terminus, the 1072-residue chain is Rho family-interacting cell polarization regulator 2 (1072 aa).

Positions 83–112 (NGLDEYLEVHQTELDKLTAQLKDMRRNSRL) form a coiled coil. Residues 173–470 (RESLTEINRS…ATTATQHRAR (298 aa)) form a necessary for interaction with NCAM and myoblast protrusion formation region. Disordered stretches follow at residues 439-465 (DRVP…TTAT) and 683-718 (EVEK…AGSP). The span at 447-460 (AEPSSAHVTSSPDI) shows a compositional bias: polar residues. Residues 683–698 (EVEKNSYRTEHPEARG) show a composition bias toward basic and acidic residues.

It belongs to the RIPOR family. As to quaternary structure, homooligomer; homooligomerization is regulated by RHOC and leads to the formation of concatemers through the association of N- and C-termini. Interacts with NCAM; this interaction is necessary for myoblast protrusion formation. In terms of tissue distribution, expressed in myoblast and myotubes (at protein level). Expressed in brain, eyes and skeletal muscle.

Its subcellular location is the cytoplasm. It is found in the cytoskeleton. It localises to the cell projection. The protein resides in the filopodium. The protein localises to the apical cell membrane. Its subcellular location is the stereocilium. It is found in the stereocilium membrane. Functionally, acts as an inhibitor of the small GTPase RHOA and plays several roles in the regulation of myoblast and hair cell differentiation, lymphocyte T proliferation and neutrophil polarization. Plays a role in fetal mononuclear myoblast differentiation by promoting filopodia and myotube formation. Maintains naive T lymphocytes in a quiescent state and prevents chemokine-induced T lymphocyte responses, such as cell adhesion, polarization and migration. Involved also in the regulation of neutrophil polarization, chemotaxis and adhesion. Required for normal development of inner and outer hair cell stereocilia within the cochlea of the inner ear. Plays a role for maintaining the structural organization of the basal domain of stereocilia. Involved in mechanosensory hair cell function. Required for normal hearing. In Coturnix japonica (Japanese quail), this protein is Rho family-interacting cell polarization regulator 2.